The following is a 153-amino-acid chain: UPF0756 membrane protein lin1603 (153 aa).

The next 4 membrane-spanning stretches (helical) occupy residues 6 to 26 (MLFLLLFLLLGLIAKNNSLII), 54 to 74 (WGVTIITVAILIPIATGQIGF), 80 to 100 (SFKSAAGWIGLGAGIAVSILA), and 117 to 137 (LVFGTILAVVLFRGIAAGPVI).

This sequence belongs to the UPF0756 family.

The protein localises to the cell membrane. The polypeptide is UPF0756 membrane protein lin1603 (Listeria innocua serovar 6a (strain ATCC BAA-680 / CLIP 11262)).